A 148-amino-acid polypeptide reads, in one-letter code: Large-conductance mechanosensitive channel (148 aa).

The next 2 helical transmembrane spans lie at 9–29 and 79–99; these read AFAV…GAAF and IQTV…VKAI.

Belongs to the MscL family. As to quaternary structure, homopentamer.

The protein resides in the cell inner membrane. Channel that opens in response to stretch forces in the membrane lipid bilayer. May participate in the regulation of osmotic pressure changes within the cell. The sequence is that of Large-conductance mechanosensitive channel from Pseudomonas syringae pv. tomato (strain ATCC BAA-871 / DC3000).